The chain runs to 361 residues: Molybdenum import ATP-binding protein ModC (361 aa).

Residues 1–228 (MLTINIEKQL…EQMRPWVPLQ (228 aa)) enclose the ABC transporter domain. Residue 31-38 (GRSGAGKT) participates in ATP binding. Positions 289–356 (RSSIRNVLKG…IKGVTMTQMD (68 aa)) constitute a Mop domain.

Belongs to the ABC transporter superfamily. Molybdate importer (TC 3.A.1.8) family. In terms of assembly, the complex is composed of two ATP-binding proteins (ModC), two transmembrane proteins (ModB) and a solute-binding protein (ModA).

The protein resides in the cell inner membrane. The enzyme catalyses molybdate(out) + ATP + H2O = molybdate(in) + ADP + phosphate + H(+). Functionally, part of the ABC transporter complex ModABC involved in molybdenum import. Responsible for energy coupling to the transport system. This Shewanella oneidensis (strain ATCC 700550 / JCM 31522 / CIP 106686 / LMG 19005 / NCIMB 14063 / MR-1) protein is Molybdenum import ATP-binding protein ModC.